Reading from the N-terminus, the 339-residue chain is Ketol-acid reductoisomerase (NADP(+)) (339 aa).

The region spanning 1-182 is the KARI N-terminal Rossmann domain; the sequence is MRVYYDRDAD…GGGRAGIIET (182 aa). NADP(+) contacts are provided by residues 24–27, arginine 48, serine 51, threonine 53, and 83–86; these read YGSQ and DELQ. The active site involves histidine 108. Glycine 134 contributes to the NADP(+) binding site. The 146-residue stretch at 183 to 328 folds into the KARI C-terminal knotted domain; that stretch reads TFREECETDL…AKLREMMPWI (146 aa). Aspartate 191, glutamate 195, glutamate 227, and glutamate 231 together coordinate Mg(2+). A substrate-binding site is contributed by serine 252.

This sequence belongs to the ketol-acid reductoisomerase family. Mg(2+) is required as a cofactor.

It carries out the reaction (2R)-2,3-dihydroxy-3-methylbutanoate + NADP(+) = (2S)-2-acetolactate + NADPH + H(+). The catalysed reaction is (2R,3R)-2,3-dihydroxy-3-methylpentanoate + NADP(+) = (S)-2-ethyl-2-hydroxy-3-oxobutanoate + NADPH + H(+). It functions in the pathway amino-acid biosynthesis; L-isoleucine biosynthesis; L-isoleucine from 2-oxobutanoate: step 2/4. Its pathway is amino-acid biosynthesis; L-valine biosynthesis; L-valine from pyruvate: step 2/4. Functionally, involved in the biosynthesis of branched-chain amino acids (BCAA). Catalyzes an alkyl-migration followed by a ketol-acid reduction of (S)-2-acetolactate (S2AL) to yield (R)-2,3-dihydroxy-isovalerate. In the isomerase reaction, S2AL is rearranged via a Mg-dependent methyl migration to produce 3-hydroxy-3-methyl-2-ketobutyrate (HMKB). In the reductase reaction, this 2-ketoacid undergoes a metal-dependent reduction by NADPH to yield (R)-2,3-dihydroxy-isovalerate. This Rhodopseudomonas palustris (strain BisA53) protein is Ketol-acid reductoisomerase (NADP(+)).